The chain runs to 1083 residues: Solute carrier family 12 member 7 (1083 aa).

Residues Met-1–Pro-51 form a disordered region. Residues Met-1–Gly-119 lie on the Cytoplasmic side of the membrane. Positions Ala-12 to Glu-27 are enriched in basic and acidic residues. 4 positions are modified to phosphoserine: Ser-30, Ser-33, Ser-50, and Ser-62. Residues Thr-120–Thr-142 form a discontinuously helical membrane-spanning segment. Asn-131 and Ile-132 together coordinate K(+). Chloride is bound at residue Val-135. Residues Trp-143–Gly-149 are Extracellular-facing. A helical membrane pass occupies residues Val-150 to Ser-172. The Cytoplasmic segment spans residues Ala-173–Glu-196. Residues Phe-197 to Leu-225 form a helical membrane-spanning segment. The Extracellular portion of the chain corresponds to Thr-226–Asn-249. A run of 2 helical transmembrane segments spans residues Asn-250–Lys-271 and Tyr-272–Phe-300. The Extracellular portion of the chain corresponds to Ala-301–Tyr-419. Residues Asn-312, Asn-331, and Asn-360 are each glycosylated (N-linked (GlcNAc...) asparagine). Residues Phe-420 to Arg-440 traverse the membrane as a helical segment. K(+) is bound by residues Pro-429 and Thr-432. Chloride is bound at residue Pro-429. The chloride site is built by Gly-433 and Ile-434. Over Ser-441–Ser-450 the chain is Cytoplasmic. The helical transmembrane segment at Ile-451–Phe-473 threads the bilayer. Topologically, residues Gly-474 to Pro-504 are extracellular. The helical transmembrane segment at Trp-505 to Gln-531 threads the bilayer. Residues Ala-532–Pro-554 lie on the Cytoplasmic side of the membrane. 2 consecutive transmembrane segments (helical) span residues Thr-555–Ser-573 and Leu-574–Val-598. Tyr-589 is a binding site for chloride. Residues Gln-599–Lys-612 are Cytoplasmic-facing. A run of 2 helical transmembrane segments spans residues Phe-613–Trp-635 and Tyr-636–Tyr-651. Residues Ile-652 to Ser-1083 lie on the Cytoplasmic side of the membrane. Residues Gly-664 to Val-680 are scissor helix. Thr-973 and Thr-980 each carry phosphothreonine.

Belongs to the SLC12A transporter family. K/Cl co-transporter subfamily. As to quaternary structure, homodimer; adopts a domain-swap conformation at the scissor helices connecting the transmembrane domain and C-terminal domain. Heterodimer with K-Cl cotransporter SLC12A5. Widely expressed with highest levels in kidney, liver and pancreas. Expressed in choroid plexus and suprachiasmatic nucleus.

Its subcellular location is the cell membrane. It carries out the reaction K(+)(in) + chloride(in) = K(+)(out) + chloride(out). With respect to regulation, activated by N-ethylmaleimide (NEM). Inhibited by furosemide, DIDS and bumetanide. The inhibition is much stronger in the presence of 50 mM K(+) in the uptake medium. Inhibited by DIOA. Inhibited by WNK3. Functionally, mediates electroneutral potassium-chloride cotransport when activated by cell swelling. May mediate K(+) uptake into Deiters' cells in the cochlea and contribute to K(+) recycling in the inner ear. Important for the survival of cochlear outer and inner hair cells and the maintenance of the organ of Corti. May be required for basolateral Cl(-) extrusion in the kidney and contribute to renal acidification. This is Solute carrier family 12 member 7 from Rattus norvegicus (Rat).